The chain runs to 101 residues: Apolipoprotein C-II (101 aa).

The signal sequence occupies residues 1-22; it reads MGIRYLLVLVLVLLVLGCEVQG. A propeptide spanning residues 23 to 28 is cleaved from the precursor; the sequence is AHMPQQ. The interval 66–74 is lipid binding; the sequence is TMDEKIREI. The lipoprotein lipase cofactor stretch occupies residues 78–101; sequence STAAVSTYAGIFTDQLLSMLKGDQ.

Belongs to the apolipoprotein C2 family. Proapolipoprotein C-II is synthesized as a sialic acid containing glycoprotein which is subsequently desialylated prior to its proteolytic processing. Post-translationally, proapolipoprotein C-II, the major form found in plasma undergoes proteolytic cleavage of its N-terminal hexapeptide to generate apolipoprotein C-II, which occurs as the minor form in plasma.

The protein resides in the secreted. Functionally, component of chylomicrons, very low-density lipoproteins (VLDL), low-density lipoproteins (LDL), and high-density lipoproteins (HDL) in plasma. Plays an important role in lipoprotein metabolism as an activator of lipoprotein lipase. Both proapolipoprotein C-II and apolipoprotein C-II can activate lipoprotein lipase. The sequence is that of Apolipoprotein C-II (APOC2) from Neomonachus schauinslandi (Hawaiian monk seal).